A 490-amino-acid chain; its full sequence is MFDFDDLSQAIARQTVLCVGDLMLDEFVYGEVSRISPEAPAPVIAVQRSETNIGGAGNVARNIAALGARGIFVGLVGQDAAGDQLEAELAKVDGIESVLVRDPSRPTTRKVRFVSEHFSTHMLRADWERAAPASEDIEQKLIAAILPLIARADIVLLSDYAKGVLTARVLRNVIDATRRAGKRVIVDPKSANLAIYRGASVLTPNRKEFSEATRSRAETEQEIAAAAQDAIYLADCEAILVTQSERGMTLVPRQGDPIHVPAYPVKVRDVSGAGDTVVAVLAAALAAGAAWEDALRMASAAAAVAVSKQGTASVTSAELRRKILPHAYRAAEEKIIENDGELATRVAVWRSEGLRVGFTNGCFDILHPGHVKVLTAARAACDRLVVGLNSDTSVKRLKGESRPVQDERARAEVLAALEAVDLVAIFTEETPLRLIELVRPSVLVKGGDYTREQVVGHEVVEAAGGEVLLIDILKGHSTTALVDRARSDQR.

The interval 1-330 is ribokinase; it reads MFDFDDLSQA…RKILPHAYRA (330 aa). Residue 205 to 208 coordinates ATP; sequence NRKE. Aspartate 275 is an active-site residue. Residues 358-490 form a cytidylyltransferase region; the sequence is FTNGCFDILH…LVDRARSDQR (133 aa).

The protein in the N-terminal section; belongs to the carbohydrate kinase PfkB family. This sequence in the C-terminal section; belongs to the cytidylyltransferase family. Homodimer.

The enzyme catalyses D-glycero-beta-D-manno-heptose 7-phosphate + ATP = D-glycero-beta-D-manno-heptose 1,7-bisphosphate + ADP + H(+). It carries out the reaction D-glycero-beta-D-manno-heptose 1-phosphate + ATP + H(+) = ADP-D-glycero-beta-D-manno-heptose + diphosphate. The protein operates within nucleotide-sugar biosynthesis; ADP-L-glycero-beta-D-manno-heptose biosynthesis; ADP-L-glycero-beta-D-manno-heptose from D-glycero-beta-D-manno-heptose 7-phosphate: step 1/4. It functions in the pathway nucleotide-sugar biosynthesis; ADP-L-glycero-beta-D-manno-heptose biosynthesis; ADP-L-glycero-beta-D-manno-heptose from D-glycero-beta-D-manno-heptose 7-phosphate: step 3/4. Its function is as follows. Catalyzes the phosphorylation of D-glycero-D-manno-heptose 7-phosphate at the C-1 position to selectively form D-glycero-beta-D-manno-heptose-1,7-bisphosphate. Catalyzes the ADP transfer from ATP to D-glycero-beta-D-manno-heptose 1-phosphate, yielding ADP-D-glycero-beta-D-manno-heptose. The polypeptide is Bifunctional protein HldE (Bradyrhizobium sp. (strain ORS 278)).